The sequence spans 549 residues: YTH domain-containing family protein 1 (549 aa).

5 disordered regions span residues 29–102, 139–165, 243–262, 273–298, and 425–458; these read QAPW…QPNM, GHPPHQAPVDSQSNVVRGPPRKPRQSG, GASGITAPTGPSATTPQQAV, DSTETQSDNADTDTPTAVGTPDAKGP, and REDSSEGVTQEEPAPAVAEQDDTTGGLDGNSENK. The span at 49–61 shows a compositional bias: polar residues; sequence VVGQTQSSPQYNG. Residues 71-102 are compositionally biased toward low complexity; that stretch reads QGYYMPQQQQQQQQMPQYYGGPMSPSQPQPNM. 2 stretches are compositionally biased toward polar residues: residues 251 to 260 and 273 to 289; these read TGPSATTPQQ and DSTETQSDNADTDTPTA. A YTH domain is found at 307–513; the sequence is DRFFVLKSLT…SVGRRLIGLF (207 aa).

It belongs to the YTHDF family. YTHDF1 subfamily.

Its function is as follows. Specifically recognizes and binds N6-methyladenosine (m6A)-containing mRNAs, and regulates their stability. M6A is a modification present at internal sites of mRNAs and some non-coding RNAs and plays a role in mRNA stability and processing. Directly interacts with the acid phosphatase APHA mRNA to increase its stability. The protein is YTH domain-containing family protein 1 of Cryphonectria parasitica (strain ATCC 38755 / EP155).